Consider the following 254-residue polypeptide: Urease accessory protein UreF (254 aa).

The segment covering 1 to 11 (MDKGKSVKSTE) has biased composition (basic and acidic residues). The interval 1-26 (MDKGKSVKSTEKSVGMPPKTPKTDNN) is disordered.

This sequence belongs to the UreF family. As to quaternary structure, ureH, UreF and UreG form a complex that acts as a GTP-hydrolysis-dependent molecular chaperone, activating the urease apoprotein by helping to assemble the nickel containing metallocenter of UreC. The UreE protein probably delivers the nickel.

It is found in the cytoplasm. Its function is as follows. Required for maturation of urease via the functional incorporation of the urease nickel metallocenter. The sequence is that of Urease accessory protein UreF from Helicobacter pylori (strain ATCC 700392 / 26695) (Campylobacter pylori).